We begin with the raw amino-acid sequence, 443 residues long: Glutamate-1-semialdehyde 2,1-aminomutase (443 aa).

The segment covering 1–16 (MSVNADSQHSNNSSHQ) has biased composition (low complexity). Residues 1–22 (MSVNADSQHSNNSSHQASEKAF) are disordered. Lysine 277 bears the N6-(pyridoxal phosphate)lysine mark.

Belongs to the class-III pyridoxal-phosphate-dependent aminotransferase family. HemL subfamily. Homodimer. Requires pyridoxal 5'-phosphate as cofactor.

The protein resides in the cytoplasm. It carries out the reaction (S)-4-amino-5-oxopentanoate = 5-aminolevulinate. It functions in the pathway porphyrin-containing compound metabolism; protoporphyrin-IX biosynthesis; 5-aminolevulinate from L-glutamyl-tRNA(Glu): step 2/2. The polypeptide is Glutamate-1-semialdehyde 2,1-aminomutase (Corynebacterium jeikeium (strain K411)).